A 307-amino-acid polypeptide reads, in one-letter code: Ribonuclease Z (307 aa).

Residues histidine 63, histidine 65, aspartate 67, histidine 68, histidine 143, aspartate 213, and histidine 271 each coordinate Zn(2+). Catalysis depends on aspartate 67, which acts as the Proton acceptor.

Belongs to the RNase Z family. Homodimer. The cofactor is Zn(2+).

The enzyme catalyses Endonucleolytic cleavage of RNA, removing extra 3' nucleotides from tRNA precursor, generating 3' termini of tRNAs. A 3'-hydroxy group is left at the tRNA terminus and a 5'-phosphoryl group is left at the trailer molecule.. In terms of biological role, zinc phosphodiesterase, which displays some tRNA 3'-processing endonuclease activity. Probably involved in tRNA maturation, by removing a 3'-trailer from precursor tRNA. The sequence is that of Ribonuclease Z from Lactococcus lactis subsp. cremoris (strain MG1363).